The primary structure comprises 333 residues: Fructose-1,6-bisphosphatase class 1 (333 aa).

The Mg(2+) site is built by Glu-92, Asp-113, Leu-115, and Asp-116. Substrate-binding positions include 116-119 (DGSS), Asn-209, Tyr-242, and Lys-272. Residue Glu-278 coordinates Mg(2+).

Belongs to the FBPase class 1 family. In terms of assembly, homotetramer. It depends on Mg(2+) as a cofactor.

Its subcellular location is the cytoplasm. The catalysed reaction is beta-D-fructose 1,6-bisphosphate + H2O = beta-D-fructose 6-phosphate + phosphate. It functions in the pathway carbohydrate biosynthesis; Calvin cycle. This Pelodictyon phaeoclathratiforme (strain DSM 5477 / BU-1) protein is Fructose-1,6-bisphosphatase class 1.